A 76-amino-acid chain; its full sequence is Acyl carrier protein (76 aa).

A Carrier domain is found at 1 to 76; sequence MSIEERVKKI…SAIDYVQNNQ (76 aa). Ser-36 carries the O-(pantetheine 4'-phosphoryl)serine modification.

The protein belongs to the acyl carrier protein (ACP) family. 4'-phosphopantetheine is transferred from CoA to a specific serine of apo-ACP by AcpS. This modification is essential for activity because fatty acids are bound in thioester linkage to the sulfhydryl of the prosthetic group.

The protein resides in the cytoplasm. Its pathway is lipid metabolism; fatty acid biosynthesis. Its function is as follows. Carrier of the growing fatty acid chain in fatty acid biosynthesis. This is Acyl carrier protein from Actinobacillus succinogenes (strain ATCC 55618 / DSM 22257 / CCUG 43843 / 130Z).